A 508-amino-acid chain; its full sequence is tRNA-2-methylthio-N(6)-dimethylallyladenosine synthase (508 aa).

One can recognise an MTTase N-terminal domain in the interval 13–131; that stretch reads KTYEVRTYGC…LPVLLERARV (119 aa). The [4Fe-4S] cluster site is built by C22, C60, C94, C168, C172, and C175. The Radical SAM core domain occupies 154–385; sequence RESAYAAWVS…ALQEEISWDE (232 aa). The region spanning 387–455 is the TRAM domain; it reads KKQVGRTLEL…PHHLLAEGPV (69 aa).

The protein belongs to the methylthiotransferase family. MiaB subfamily. In terms of assembly, monomer. It depends on [4Fe-4S] cluster as a cofactor.

Its subcellular location is the cytoplasm. The enzyme catalyses N(6)-dimethylallyladenosine(37) in tRNA + (sulfur carrier)-SH + AH2 + 2 S-adenosyl-L-methionine = 2-methylsulfanyl-N(6)-dimethylallyladenosine(37) in tRNA + (sulfur carrier)-H + 5'-deoxyadenosine + L-methionine + A + S-adenosyl-L-homocysteine + 2 H(+). Its function is as follows. Catalyzes the methylthiolation of N6-(dimethylallyl)adenosine (i(6)A), leading to the formation of 2-methylthio-N6-(dimethylallyl)adenosine (ms(2)i(6)A) at position 37 in tRNAs that read codons beginning with uridine. The polypeptide is tRNA-2-methylthio-N(6)-dimethylallyladenosine synthase (Streptomyces avermitilis (strain ATCC 31267 / DSM 46492 / JCM 5070 / NBRC 14893 / NCIMB 12804 / NRRL 8165 / MA-4680)).